The following is a 245-amino-acid chain: uncharacterized protein (245 aa).

This is an uncharacterized protein from Dictyostelium discoideum (Social amoeba).